The sequence spans 706 residues: Transcription factor 12 (706 aa).

Residues 25 to 109 form a disordered region; it reads AMFSPPVNSG…TPFMNSNLIG (85 aa). Polar residues-rich tracts occupy residues 30-48 and 56-76; these read PVNSGKTRPTTLGSSQFSG and GTTSWGTSGQPSPSYDSSRGF. Serine 47, serine 67, and serine 79 each carry phosphoserine. Basic and acidic residues predominate over residues 81-93; it reads HYSDHLNDSRLGT. A Phosphoserine modification is found at serine 98. Lysine 110 participates in a covalent cross-link: Glycyl lysine isopeptide (Lys-Gly) (interchain with G-Cter in SUMO2). A phosphoserine mark is found at serine 116 and serine 124. The tract at residues 119-140 is leucine-zipper; it reads LYSRDSGLSGCQSSLLRQDLGL. Disordered regions lie at residues 140-222 and 249-313; these read LGSP…SMFA and FGGI…ASHT. Positions 144 to 163 are enriched in polar residues; the sequence is AQLSSSGKPGTPYYSFSATS. Lysine 181 participates in a covalent cross-link: Glycyl lysine isopeptide (Lys-Gly) (interchain with G-Cter in SUMO2). Positions 181–188 match the Nuclear localization signal motif; the sequence is KKVRKVPP. Residues 256 to 269 show a composition bias toward low complexity; the sequence is STSHMSQSSSYGSL. Over residues 282–306 the composition is skewed to polar residues; the sequence is VSPTDINTSLPPMSSFHRGSTSSSP. Threonine 313 bears the Phosphothreonine mark. Position 333 is a phosphoserine (serine 333). 2 disordered regions span residues 349 to 392 and 520 to 604; these read PDHT…YENS and HKTP…ERRM. Positions 352 to 363 are enriched in low complexity; the sequence is TSSSFPSNPSTP. 2 stretches are compositionally biased toward polar residues: residues 364–376 and 383–392; these read VGSPSPLTGTSQW and APSSPSYENS. A Phosphoserine modification is found at serine 392. Basic and acidic residues-rich tracts occupy residues 542 to 554 and 560 to 575; these read IKTENKEKDENLH and DDMKSDDESSQKDIKV. A Glycyl lysine isopeptide (Lys-Gly) (interchain with G-Cter in SUMO2) cross-link involves residue lysine 543. Serine 564 carries the phosphoserine modification. Lysine 574 is covalently cross-linked (Glycyl lysine isopeptide (Lys-Gly) (interchain with G-Cter in SUMO2)). Threonine 581 is subject to Phosphothreonine. Serine 582 and serine 583 each carry phosphoserine. A compositionally biased stretch (basic and acidic residues) spans 592 to 604; the sequence is PEQKIEREKERRM. Residues 601–654 form the bHLH domain; it reads ERRMANNARERLRVRDINEAFKELGRMCQLHLKSEKPQTKLLILHQAVAVILSL. Residues lysine 633 and lysine 677 each participate in a glycyl lysine isopeptide (Lys-Gly) (interchain with G-Cter in SUMO2) cross-link. A class A specific domain region spans residues 656–679; sequence QQVRERNLNPKAACLKRREEEKVS. Residues 674–706 are disordered; it reads EEEKVSAASAEPPNTLPGAHPGLSESTNPMGHL. Over residues 697–706 the composition is skewed to polar residues; sequence SESTNPMGHL.

Efficient DNA binding requires dimerization with another bHLH protein. Forms homo- or heterooligomers with myogenin, E12 and ITF2 proteins and RUNX1T1. Interacts with PTF1A. Interacts with NEUROD2. Interacts with BHLHA9. As to expression, widely expressed.

It localises to the nucleus. Functionally, transcriptional regulator. Involved in the initiation of neuronal differentiation. Activates transcription by binding to the E box (5'-CANNTG-3'). May be involved in the functional network that regulates the development of the GnRH axis. This chain is Transcription factor 12 (Tcf12), found in Mus musculus (Mouse).